The following is a 414-amino-acid chain: MTYRAKSDFLNVMIERGYLADCTDMQALDDALIDGPVTAYIGYDATAASLHVGHLLNIMMLRWFQKTGNRPITLMGGGTTKVGDPSFRSEERPLLTPDKIDENIAGMKQVFARYLDYGDQGAMMLNNAEWLDSLNYLDFLRDIGRHFSVNRMLSFESVKSRLDREQSLSFLEFNYMILQAYDFLELYRRYGCRLQMGGSDQWGNIVNGIDLTRRVLDAEIWGLTSPLLTTSDGRKMGKSAGGAVWLNGAMLSPYEFWQFWRNTTDADVGRFLKLYTELPVEECDRLGALSGSEINAAKIILANEVTTLLHGADAAASAEATAREVFEQGGAGGDLEVVTLSADALASGLTVVQLLAQTGITASGKEAKRLIAEGGLRLNNEAVSDPQLAVDAALIGDGLKVSVGKKKHRMVQLG.

Tyr-40 contacts L-tyrosine. The short motif at 45 to 54 is the 'HIGH' region element; sequence ATAASLHVGH. 2 residues coordinate L-tyrosine: Tyr-175 and Gln-179. The 'KMSKS' region signature appears at 235–239; that stretch reads KMGKS. ATP is bound at residue Lys-238. The S4 RNA-binding domain maps to 349–414; that stretch reads LTVVQLLAQT…KKKHRMVQLG (66 aa).

It belongs to the class-I aminoacyl-tRNA synthetase family. TyrS type 1 subfamily. Homodimer.

Its subcellular location is the cytoplasm. It carries out the reaction tRNA(Tyr) + L-tyrosine + ATP = L-tyrosyl-tRNA(Tyr) + AMP + diphosphate + H(+). Functionally, catalyzes the attachment of tyrosine to tRNA(Tyr) in a two-step reaction: tyrosine is first activated by ATP to form Tyr-AMP and then transferred to the acceptor end of tRNA(Tyr). The sequence is that of Tyrosine--tRNA ligase from Paracoccus denitrificans (strain Pd 1222).